We begin with the raw amino-acid sequence, 167 residues long: Cytochrome c-type biogenesis protein CcmE (167 aa).

Topologically, residues 1–7 are cytoplasmic; that stretch reads MTRKQRR. A helical; Signal-anchor for type II membrane protein membrane pass occupies residues 8–28; it reads LLMIGGAGVVLIVAVGLVLNA. Over 29-167 the chain is Periplasmic; the sequence is LRDSIVFFST…TSANAAEGGK (139 aa). Heme contacts are provided by H122 and Y126. Over residues 137–150 the composition is skewed to basic and acidic residues; that stretch reads KDGHWKDDYGKKSP. Residues 137–167 form a disordered region; that stretch reads KDGHWKDDYGKKSPGETTAGQTSANAAEGGK. Residues 151 to 161 are compositionally biased toward polar residues; that stretch reads GETTAGQTSAN.

This sequence belongs to the CcmE/CycJ family.

The protein localises to the cell inner membrane. Its function is as follows. Heme chaperone required for the biogenesis of c-type cytochromes. Transiently binds heme delivered by CcmC and transfers the heme to apo-cytochromes in a process facilitated by CcmF and CcmH. The chain is Cytochrome c-type biogenesis protein CcmE from Rhodopseudomonas palustris (strain ATCC BAA-98 / CGA009).